A 222-amino-acid chain; its full sequence is Protein GrpE (222 aa).

Positions 1-21 are disordered; that stretch reads MSDEKNKFTDASFENCDLKNP.

Belongs to the GrpE family. As to quaternary structure, homodimer.

It localises to the cytoplasm. Its function is as follows. Participates actively in the response to hyperosmotic and heat shock by preventing the aggregation of stress-denatured proteins, in association with DnaK and GrpE. It is the nucleotide exchange factor for DnaK and may function as a thermosensor. Unfolded proteins bind initially to DnaJ; upon interaction with the DnaJ-bound protein, DnaK hydrolyzes its bound ATP, resulting in the formation of a stable complex. GrpE releases ADP from DnaK; ATP binding to DnaK triggers the release of the substrate protein, thus completing the reaction cycle. Several rounds of ATP-dependent interactions between DnaJ, DnaK and GrpE are required for fully efficient folding. This chain is Protein GrpE, found in Bartonella tribocorum (strain CIP 105476 / IBS 506).